Here is a 281-residue protein sequence, read N- to C-terminus: MSSSSWLGCLLAVLLSALALSQGLPLLEDLDENSFPDGRIVGGYVTDIAQVPYQITLRYKAISSPENPFRHRCGGSIVNETTILTAAHCVIGTVASQFKVVAGTNFQTGTDGVITNVKRVIMHEGYNSGAAYNNDIAVLFVDPPLPLNNFTIKAIKLATEPPLDGAPSKISGWGSTYPGGYSSNQLLAVDVPIVGNDLCDLDYENFIDETYHITSAMLCAGKRGVGGADACQGDSGGPLVVRDELHGVVSWGNSCALPNYPGVYANVAFLRPWIDAVRAGL.

The first 23 residues, 1–23, serve as a signal peptide directing secretion; the sequence is MSSSSWLGCLLAVLLSALALSQG. A propeptide spans 24–39 (activation peptide); sequence LPLLEDLDENSFPDGR. Residues 40-279 enclose the Peptidase S1 domain; it reads IVGGYVTDIA…LRPWIDAVRA (240 aa). A disulfide bridge connects residues Cys73 and Cys89. Active-site charge relay system residues include His88 and Asp135. 2 cysteine pairs are disulfide-bonded: Cys199–Cys219 and Cys231–Cys255. The active-site Charge relay system is the Ser235.

The protein belongs to the peptidase S1 family.

It is found in the secreted. The protein resides in the extracellular space. It carries out the reaction Preferential cleavage: Arg-|-Xaa, Lys-|-Xaa.. The protein is Trypsin zeta (zetaTry) of Drosophila erecta (Fruit fly).